We begin with the raw amino-acid sequence, 206 residues long: 7-methyl-GTP pyrophosphatase (206 aa).

Asp-82 serves as the catalytic Proton acceptor.

Belongs to the Maf family. YceF subfamily. The cofactor is a divalent metal cation.

It localises to the cytoplasm. The catalysed reaction is N(7)-methyl-GTP + H2O = N(7)-methyl-GMP + diphosphate + H(+). Nucleoside triphosphate pyrophosphatase that hydrolyzes 7-methyl-GTP (m(7)GTP). May have a dual role in cell division arrest and in preventing the incorporation of modified nucleotides into cellular nucleic acids. The chain is 7-methyl-GTP pyrophosphatase from Shewanella denitrificans (strain OS217 / ATCC BAA-1090 / DSM 15013).